A 312-amino-acid chain; its full sequence is Olfactory receptor 6C74 (312 aa).

The Extracellular segment spans residues 1-23; it reads MRNHTTVANFILLGLTDDPQLQV. Residue asparagine 3 is glycosylated (N-linked (GlcNAc...) asparagine). A helical transmembrane segment spans residues 24–44; the sequence is IIFLLLFFTYMLSITGNLTII. Over 45 to 63 the chain is Cytoplasmic; the sequence is TLTLLDLHLKTPMYFFLRN. Residues 64–84 form a helical membrane-spanning segment; that stretch reads FSFLEVSFTTVYIPKFLVSMA. Residues 85–95 are Extracellular-facing; sequence TGDKTISYNDC. A disulfide bond links cysteine 95 and cysteine 177. The helical transmembrane segment at 96–116 threads the bilayer; that stretch reads AAQLFFTILLGATEFFLLAAM. Topologically, residues 117 to 140 are cytoplasmic; the sequence is SYERYVAICKPLHYTTIMSSRVCS. Residues 141–161 form a helical membrane-spanning segment; the sequence is LLVFASWMAGFLIIFPPLLMG. Topologically, residues 162–194 are extracellular; the sequence is LQLDFCAANTVDHFFCDVSPILQLSCTDTDIIE. A helical transmembrane segment spans residues 195-215; that stretch reads LMMLLSAILTLLVTLVLVILS. The Cytoplasmic segment spans residues 216–237; the sequence is YTNIIRTILKIPSSQQRKKAFS. A helical transmembrane segment spans residues 238–258; that stretch reads TCSSHMVVVSISYGSCIFMYV. Residues 259–269 lie on the Extracellular side of the membrane; the sequence is KPSAKERVSLN. A helical membrane pass occupies residues 270–290; it reads KGIALLSTSVAPMLNPFIYTL. Topologically, residues 291 to 312 are cytoplasmic; sequence RNKQVKDVFKHTVKKIELFSMK.

It belongs to the G-protein coupled receptor 1 family.

It localises to the cell membrane. In terms of biological role, odorant receptor. The protein is Olfactory receptor 6C74 (OR6C74) of Homo sapiens (Human).